The primary structure comprises 926 residues: Alpha-aminoadipic semialdehyde synthase, mitochondrial (926 aa).

The N-terminal 27 residues, 1–27 (MLRAQRPRLARLRACLSRGLHHKPVMA), are a transit peptide targeting the mitochondrion. The interval 28–455 (LRREDVNAWE…DAVITSNGLL (428 aa)) is lysine-ketoglutarate reductase. Lysine 48, lysine 52, and lysine 56 each carry N6-acetyllysine. At lysine 93 the chain carries N6-acetyllysine; alternate. Lysine 93 is subject to N6-succinyllysine; alternate. Lysine 128 is subject to N6-acetyllysine. N6-acetyllysine; alternate is present on lysine 138. Lysine 138 bears the N6-succinyllysine; alternate mark. An N6-succinyllysine modification is found at lysine 274. An N6-acetyllysine; alternate modification is found at lysine 286. Position 286 is an N6-succinyllysine; alternate (lysine 286). The residue at position 333 (lysine 333) is an N6-succinyllysine. Lysine 458 carries the N6-acetyllysine; alternate modification. Residue lysine 458 is modified to N6-succinyllysine; alternate. Residues 477 to 926 (MSTKKKVLVL…VFNTQSTIKL (450 aa)) form a saccharopine dehydrogenase region. NAD(+)-binding residues include serine 488, aspartate 512, and glutamine 516. N6-acetyllysine; alternate is present on residues lysine 523 and lysine 535. An N6-succinyllysine; alternate mark is found at lysine 523 and lysine 535. NAD(+)-binding residues include leucine 554, alanine 576, and serine 577. 577-578 (SY) is a binding site for L-saccharopine. Lysine 584 is subject to N6-acetyllysine; alternate. Lysine 584 is modified (N6-succinyllysine; alternate). NAD(+) contacts are provided by leucine 603, aspartate 604, and proline 605. Aspartate 604 provides a ligand contact to L-saccharopine. Residue arginine 703 participates in L-saccharopine binding. Lysine 707 carries the N6-acetyllysine modification. L-saccharopine is bound at residue 724-726 (TLR). Lysine 732 carries the N6-succinyllysine modification. At lysine 739 the chain carries N6-acetyllysine. Lysine 761 carries the post-translational modification N6-acetyllysine; alternate. Lysine 761 carries the post-translational modification N6-succinyllysine; alternate. N6-acetyllysine is present on residues lysine 778 and lysine 780.

In the N-terminal section; belongs to the AlaDH/PNT family. The protein in the C-terminal section; belongs to the saccharopine dehydrogenase family. In terms of assembly, homotetramer. Highly expressed in kidney and liver, very low expression is seen in heart, brain, spleen, lung, skeletal muscle and testis.

The protein resides in the mitochondrion. The catalysed reaction is L-saccharopine + NADP(+) + H2O = L-lysine + 2-oxoglutarate + NADPH + H(+). It carries out the reaction L-saccharopine + NAD(+) + H2O = (S)-2-amino-6-oxohexanoate + L-glutamate + NADH + H(+). The protein operates within amino-acid degradation; L-lysine degradation via saccharopine pathway; glutaryl-CoA from L-lysine: step 1/6. Its pathway is amino-acid degradation; L-lysine degradation via saccharopine pathway; glutaryl-CoA from L-lysine: step 2/6. Functionally, bifunctional enzyme that catalyzes the first two steps in lysine degradation. The polypeptide is Alpha-aminoadipic semialdehyde synthase, mitochondrial (Mus musculus (Mouse)).